Here is a 533-residue protein sequence, read N- to C-terminus: WD repeat-containing protein PAC11 (533 aa).

Over residues Met1–Glu19 the composition is skewed to basic and acidic residues. A disordered region spans residues Met1–His36. 2 WD repeats span residues Phe380–Leu422 and Asn432–Gly475.

As to quaternary structure, interacts with NUM1, when DYN1 is present.

Its subcellular location is the cytoplasm. The protein localises to the cytoskeleton. Functionally, required for viability in the absence of the kinesin-related CIN8 mitotic motor. May be a dynein intermediate chain. The chain is WD repeat-containing protein PAC11 (PAC11) from Saccharomyces cerevisiae (strain ATCC 204508 / S288c) (Baker's yeast).